The chain runs to 372 residues: 4-hydroxy-3-methylbut-2-en-1-yl diphosphate synthase (flavodoxin) (372 aa).

Residues Cys-270, Cys-273, Cys-305, and Glu-312 each contribute to the [4Fe-4S] cluster site.

The protein belongs to the IspG family. [4Fe-4S] cluster serves as cofactor.

It catalyses the reaction (2E)-4-hydroxy-3-methylbut-2-enyl diphosphate + oxidized [flavodoxin] + H2O + 2 H(+) = 2-C-methyl-D-erythritol 2,4-cyclic diphosphate + reduced [flavodoxin]. The protein operates within isoprenoid biosynthesis; isopentenyl diphosphate biosynthesis via DXP pathway; isopentenyl diphosphate from 1-deoxy-D-xylulose 5-phosphate: step 5/6. In terms of biological role, converts 2C-methyl-D-erythritol 2,4-cyclodiphosphate (ME-2,4cPP) into 1-hydroxy-2-methyl-2-(E)-butenyl 4-diphosphate. In Escherichia coli O9:H4 (strain HS), this protein is 4-hydroxy-3-methylbut-2-en-1-yl diphosphate synthase (flavodoxin).